The primary structure comprises 404 residues: Metacaspase-1A (404 aa).

Residues 1–10 (MNPHHSHHHS) show a composition bias toward basic residues. The disordered stretch occupies residues 1 to 100 (MNPHHSHHHS…PSDPVSFGQG (100 aa)). Residues 24–51 (QQQPPSNPYQYNQPSPQPYQGSQPPQNG) show a composition bias toward low complexity. Residues His200 and Cys256 contribute to the active site.

Belongs to the peptidase C14B family.

Functionally, involved in cell death (apoptosis). This chain is Metacaspase-1A (casA), found in Aspergillus niger (strain ATCC MYA-4892 / CBS 513.88 / FGSC A1513).